The following is a 446-amino-acid chain: Telomere-binding protein 51 kDa subunit (446 aa).

It belongs to the telombin family. In terms of assembly, monomer.

Its subcellular location is the nucleus. The protein localises to the chromosome. It is found in the telomere. Its function is as follows. May function as protective capping of the single-stranded telomeric overhang. May also participate in telomere length regulation during DNA replication. Binds specifically to the T4G4-containing extension on the 3'strand and protects this region of the telomere from nuclease digestion and chemical modification. This Euplotes crassus protein is Telomere-binding protein 51 kDa subunit.